The sequence spans 79 residues: Conotoxin 12 (79 aa).

A signal peptide spans 1-22 (MKLTCVLIITVLFLTASQLITA). Positions 23-47 (DYSRDQRQYRAVRLGDEMRNFKGAR) are excised as a propeptide. Disulfide bonds link C49/C62, C56/C67, and C61/C77.

This sequence belongs to the conotoxin O1 superfamily. Expressed by the venom duct.

The protein localises to the secreted. This chain is Conotoxin 12, found in Conus vexillum (Flag cone).